A 509-amino-acid chain; its full sequence is Histidine ammonia-lyase (509 aa).

Positions 144–146 (ASG) form a cross-link, 5-imidazolinone (Ala-Gly). S145 is subject to 2,3-didehydroalanine (Ser).

This sequence belongs to the PAL/histidase family. Post-translationally, contains an active site 4-methylidene-imidazol-5-one (MIO), which is formed autocatalytically by cyclization and dehydration of residues Ala-Ser-Gly.

The protein localises to the cytoplasm. It carries out the reaction L-histidine = trans-urocanate + NH4(+). It functions in the pathway amino-acid degradation; L-histidine degradation into L-glutamate; N-formimidoyl-L-glutamate from L-histidine: step 1/3. The protein is Histidine ammonia-lyase of Pseudoalteromonas atlantica (strain T6c / ATCC BAA-1087).